We begin with the raw amino-acid sequence, 263 residues long: Small ribosomal subunit protein eS4, Y isoform 2 (263 aa).

Residues 42–104 (LPLIVFLRNR…TGEHFRLVYN (63 aa)) enclose the S4 RNA-binding domain.

The protein belongs to the eukaryotic ribosomal protein eS4 family.

The chain is Small ribosomal subunit protein eS4, Y isoform 2 (RPS4Y2) from Homo sapiens (Human).